Consider the following 24-residue polypeptide: Brevinin-1Sa (24 aa).

A disulfide bridge connects residues Cys-18 and Cys-24.

As to expression, expressed by the skin glands.

It localises to the secreted. Its function is as follows. Antibacterial activity against Gram-negative bacterium E.coli. The polypeptide is Brevinin-1Sa (Lithobates sphenocephalus (Southern leopard frog)).